Here is a 92-residue protein sequence, read N- to C-terminus: Small ribosomal subunit protein uS19 (92 aa).

This sequence belongs to the universal ribosomal protein uS19 family.

Its function is as follows. Protein S19 forms a complex with S13 that binds strongly to the 16S ribosomal RNA. The protein is Small ribosomal subunit protein uS19 of Lactococcus lactis subsp. cremoris (strain MG1363).